Reading from the N-terminus, the 657-residue chain is Glycogen debranching enzyme (657 aa).

Asp336 serves as the catalytic Nucleophile. Glu371 functions as the Proton donor in the catalytic mechanism. The disordered stretch occupies residues 460–479 (ANGEENRDGTNNNYSNNHGK).

This sequence belongs to the glycosyl hydrolase 13 family.

It carries out the reaction Hydrolysis of (1-&gt;6)-alpha-D-glucosidic linkages to branches with degrees of polymerization of three or four glucose residues in limit dextrin.. Its pathway is glycan degradation; glycogen degradation. Removes maltotriose and maltotetraose chains that are attached by 1,6-alpha-linkage to the limit dextrin main chain, generating a debranched limit dextrin. This is Glycogen debranching enzyme from Shigella flexneri serotype 5b (strain 8401).